Consider the following 305-residue polypeptide: tRNA pseudouridine synthase B (305 aa).

Asp39 serves as the catalytic Nucleophile.

This sequence belongs to the pseudouridine synthase TruB family. Type 1 subfamily.

The enzyme catalyses uridine(55) in tRNA = pseudouridine(55) in tRNA. Responsible for synthesis of pseudouridine from uracil-55 in the psi GC loop of transfer RNAs. The polypeptide is tRNA pseudouridine synthase B (Staphylococcus aureus (strain MW2)).